The sequence spans 207 residues: Small ribosomal subunit protein uS4 (207 aa).

The disordered stretch occupies residues 31 to 56 (KCKLDSKPGQHGRTSGARTSDYGNQL). A compositionally biased stretch (polar residues) spans 42 to 53 (GRTSGARTSDYG). An S4 RNA-binding domain is found at 97–157 (ARLDNVVYRM…EKSKKQVRIV (61 aa)).

Belongs to the universal ribosomal protein uS4 family. In terms of assembly, part of the 30S ribosomal subunit. Contacts protein S5. The interaction surface between S4 and S5 is involved in control of translational fidelity.

In terms of biological role, one of the primary rRNA binding proteins, it binds directly to 16S rRNA where it nucleates assembly of the body of the 30S subunit. Functionally, with S5 and S12 plays an important role in translational accuracy. The protein is Small ribosomal subunit protein uS4 of Janthinobacterium sp. (strain Marseille) (Minibacterium massiliensis).